A 66-amino-acid chain; its full sequence is Large ribosomal subunit protein bL35 (66 aa).

The protein belongs to the bacterial ribosomal protein bL35 family.

The chain is Large ribosomal subunit protein bL35 from Cereibacter sphaeroides (strain ATCC 17029 / ATH 2.4.9) (Rhodobacter sphaeroides).